Here is an 88-residue protein sequence, read N- to C-terminus: Small ribosomal subunit protein bS20 (88 aa).

Disordered regions lie at residues 1–23 and 69–88; these read MANS…HNAA and PNKA…AMAA. Residues 69–81 show a composition bias toward basic residues; the sequence is PNKAARHKSRLNT.

Belongs to the bacterial ribosomal protein bS20 family.

Functionally, binds directly to 16S ribosomal RNA. The chain is Small ribosomal subunit protein bS20 from Alcanivorax borkumensis (strain ATCC 700651 / DSM 11573 / NCIMB 13689 / SK2).